The following is a 139-amino-acid chain: Maximins 4/H3 type 7 (139 aa).

Positions 1–18 are cleaved as a signal peptide; the sequence is MNFKYIVAVSFLIASAYA. A propeptide spanning residues 19–43 is cleaved from the precursor; sequence RSVQNDEQSLSQRDVLEEESLREIR. N70 is modified (asparagine amide). A propeptide spanning residues 74–118 is cleaved from the precursor; that stretch reads TAEDHEVMKRLEAIMRDLDSLDYPEEASERETRGFNQDEIAKEKR. At I138 the chain carries Isoleucine amide.

This sequence belongs to the bombinin family. Expressed by the skin glands.

It is found in the secreted. Maximin-4 shows antibacterial activity against both Gram-positive and Gram-negative bacteria. It also shows antimicrobial activity against the fungus C.albicans, but not against A.flavus nor P.uticale. It has little hemolytic activity. It does not possess a significant cytotoxicity against tumor cell lines. It does not possess a significant anti-HIV activity. Functionally, maximin-H3 shows antibacterial activity against both Gram-positive and Gram-negative bacteria. It also shows antimicrobial activity against the fungus C.albicans. Shows strong hemolytic activity. The sequence is that of Maximins 4/H3 type 7 from Bombina maxima (Giant fire-bellied toad).